A 498-amino-acid chain; its full sequence is Probable malate:quinone oxidoreductase (498 aa).

Belongs to the MQO family. Requires FAD as cofactor.

It carries out the reaction (S)-malate + a quinone = a quinol + oxaloacetate. It functions in the pathway carbohydrate metabolism; tricarboxylic acid cycle; oxaloacetate from (S)-malate (quinone route): step 1/1. This is Probable malate:quinone oxidoreductase from Granulibacter bethesdensis (strain ATCC BAA-1260 / CGDNIH1).